The primary structure comprises 145 residues: MIKTILVVCIGNICRSPMAQALLRQSLPGVSVISAGIGALSGYPADPSAVEVMAHHGIDISEHRAQQLTGSLVSRADLILVMDGAQKQEIQSRHPAKTGSVFRLGEMEQFDIADPYRKQLTAFEEALEMIQRGVDAWVPRIRALG.

Cysteine 9 acts as the Nucleophile in catalysis. Arginine 15 is an active-site residue. Aspartate 114 serves as the catalytic Proton donor.

It belongs to the low molecular weight phosphotyrosine protein phosphatase family.

The catalysed reaction is O-phospho-L-tyrosyl-[protein] + H2O = L-tyrosyl-[protein] + phosphate. It participates in glycan metabolism; exopolysaccharide biosynthesis. Functionally, may be involved in assembly or function of the EPS I polymerization/export complex and/or the EpsB ATPase. Alternatively it may function in the removal of the terminal phosphate from C55-isoprenyl pyrophosphate in order to recycle the C55-isoprenyl phosphate lipid carrier used in the synthesis of polysaccharide repeat units. The sequence is that of Probable low molecular weight protein-tyrosine-phosphatase EpsP (epsP) from Ralstonia nicotianae (strain ATCC BAA-1114 / GMI1000) (Ralstonia solanacearum).